We begin with the raw amino-acid sequence, 318 residues long: L-carnitine dehydrogenase (318 aa).

An NAD(+)-binding site is contributed by 14-19 (GSGVIG).

The protein belongs to the 3-hydroxyacyl-CoA dehydrogenase family. L-carnitine dehydrogenase subfamily. As to quaternary structure, homodimer.

It is found in the cytoplasm. It carries out the reaction carnitine + NAD(+) = 3-dehydrocarnitine + NADH + H(+). It participates in amine and polyamine metabolism; carnitine metabolism. Catalyzes the NAD(+)-dependent oxidation of L-carnitine to 3-dehydrocarnitine. This chain is L-carnitine dehydrogenase, found in Pseudomonas syringae pv. syringae (strain B728a).